Consider the following 372-residue polypeptide: B2 bradykinin receptor (372 aa).

The Extracellular portion of the chain corresponds to 1 to 34 (MFNITSQVSALNATLAQGNSCLDAEWWSWLNTIQ). Residues N3 and N12 are each glycosylated (N-linked (GlcNAc...) asparagine). A helical membrane pass occupies residues 35–58 (APFLWVLFVLAVLENIFVLSVFFL). At 59 to 67 (HKSSCTVAE) the chain is on the cytoplasmic side. The helical transmembrane segment at 68–92 (IYLGNLAVADLILAFGLPFWAITIA) threads the bilayer. Residues 93-105 (NNFDWLFGEVLCR) lie on the Extracellular side of the membrane. C104 and C185 are disulfide-bonded. The helical transmembrane segment at 106–127 (MVNTMIQMNMYSSICFLMLVSI) threads the bilayer. Topologically, residues 128–149 (DRYLALVKTMSMGRMRGVRWAK) are cytoplasmic. The residue at position 130 (Y130) is a Phosphotyrosine. Residues 150-172 (LYSLVIWGCALLLSSPMLVFRTM) traverse the membrane as a helical segment. The Extracellular portion of the chain corresponds to 173 to 195 (KDYRDEGHNVTACLIIYPSLTWQ). N181 is a glycosylation site (N-linked (GlcNAc...) asparagine). The helical transmembrane segment at 196-222 (VFTNVLLNLVGFLLPLSIITFCTVQIM) threads the bilayer. Residues 223-241 (QVLRNNEMQKFKEIQTERR) lie on the Cytoplasmic side of the membrane. A helical transmembrane segment spans residues 242–266 (ATVLVLAVLLLFVVCWLPFQIGTFL). Over 267–284 (DTLRLLGFLPGCWEHVID) the chain is Extracellular. A helical transmembrane segment spans residues 285–308 (LITQISSYLAYSNSCLNPLVYVIV). Residues 309–364 (GKRFRKKSREVYHGLCRSGGCVSEPAQSENSMGTLRTSISVDRQIHKLQDWARSSS) are Cytoplasmic-facing. The residue at position 320 (Y320) is a Phosphotyrosine. The S-palmitoyl cysteine moiety is linked to residue C324. Phosphoserine is present on S339. Residue T342 is modified to Phosphothreonine. S346 and S348 each carry phosphoserine; by GRK6.

The protein belongs to the G-protein coupled receptor 1 family. Bradykinin receptor subfamily. BDKRB2 sub-subfamily. Forms a complex with PECAM1 and GNAQ. Interacts with PECAM1.

It localises to the cell membrane. Its function is as follows. Receptor for bradykinin. It is associated with G proteins that activate a phosphatidylinositol-calcium second messenger system. This chain is B2 bradykinin receptor (BDKRB2), found in Cavia porcellus (Guinea pig).